A 190-amino-acid chain; its full sequence is Peptidyl-tRNA hydrolase (190 aa).

Residue Tyr14 coordinates tRNA. The active-site Proton acceptor is His19. TRNA contacts are provided by Tyr64, Asn66, and Asn112.

The protein belongs to the PTH family. Monomer.

The protein localises to the cytoplasm. The enzyme catalyses an N-acyl-L-alpha-aminoacyl-tRNA + H2O = an N-acyl-L-amino acid + a tRNA + H(+). Functionally, hydrolyzes ribosome-free peptidyl-tRNAs (with 1 or more amino acids incorporated), which drop off the ribosome during protein synthesis, or as a result of ribosome stalling. Catalyzes the release of premature peptidyl moieties from peptidyl-tRNA molecules trapped in stalled 50S ribosomal subunits, and thus maintains levels of free tRNAs and 50S ribosomes. In Chlorobium limicola (strain DSM 245 / NBRC 103803 / 6330), this protein is Peptidyl-tRNA hydrolase.